The following is a 132-amino-acid chain: Transcriptional regulator MraZ (132 aa).

2 consecutive SpoVT-AbrB domains span residues 5–47 (TYEH…SKDD) and 76–119 (TVEI…SKNK).

The protein belongs to the MraZ family. In terms of assembly, forms oligomers.

The protein localises to the cytoplasm. It localises to the nucleoid. The protein is Transcriptional regulator MraZ of Mycoplasma capricolum subsp. capricolum (strain California kid / ATCC 27343 / NCTC 10154).